The following is a 188-amino-acid chain: Phosphatidylinositol N-acetylglucosaminyltransferase subunit H (188 aa).

The protein belongs to the PIGH family. In terms of assembly, component of the glycosylphosphatidylinositol-N-acetylglucosaminyltransferase (GPI-GnT) complex composed at least by PIGA, PIGC, PIGH, PIGP, PIGQ, PIGY and DPM2. Interacts with PIGQ.

The protein localises to the cytoplasm. Its pathway is glycolipid biosynthesis; glycosylphosphatidylinositol-anchor biosynthesis. Functionally, part of the glycosylphosphatidylinositol-N-acetylglucosaminyltransferase (GPI-GnT) complex that catalyzes the transfer of N-acetylglucosamine from UDP-N-acetylglucosamine to phosphatidylinositol and participates in the first step of GPI biosynthesis. The protein is Phosphatidylinositol N-acetylglucosaminyltransferase subunit H of Bos taurus (Bovine).